A 453-amino-acid chain; its full sequence is Gamma-aminobutyric acid receptor subunit alpha-6 (453 aa).

Positions 1 to 19 (MASSLPWLCIILWLENALG) are cleaved as a signal peptide. Residues 20-243 (KLEVEGNFYS…FHLQRKMGYF (224 aa)) are Extracellular-facing. Residue Asn-31 is glycosylated (N-linked (GlcNAc...) asparagine). Arg-84 lines the 4-aminobutanoate pocket. N-linked (GlcNAc...) asparagine glycans are attached at residues Asn-128 and Asn-141. Thr-147 lines the 4-aminobutanoate pocket. A disulfide bridge connects residues Cys-156 and Cys-170. Residues 244–264 (MIQIYTPCIMTVILSQVSFWI) traverse the membrane as a helical segment. Residues 265–270 (NKESVP) are Cytoplasmic-facing. Residues 271 to 290 (ARTVFGITTVLTMTTLSISA) form a helical membrane-spanning segment. The Extracellular segment spans residues 291–304 (RHSLPKVSYATAMD). Residues 305–325 (WFIAVCFAFVFSALIEFAAVN) form a helical membrane-spanning segment. The Cytoplasmic portion of the chain corresponds to 326 to 422 (YFTNLQTQKA…GTSKIDQYSR (97 aa)). Thr-403 carries the phosphothreonine modification. The helical transmembrane segment at 423-443 (ILFPVAFAGFNLVYWVVYLSK) threads the bilayer. Residues 444 to 453 (DTMEVSSSVE) lie on the Extracellular side of the membrane.

It belongs to the ligand-gated ion channel (TC 1.A.9) family. Gamma-aminobutyric acid receptor (TC 1.A.9.5) subfamily. GABRA6 sub-subfamily. As to quaternary structure, heteropentamer, formed by a combination of alpha (GABRA1-6), beta (GABRB1-3), gamma (GABRG1-3), delta (GABRD), epsilon (GABRE), rho (GABRR1-3), pi (GABRP) and theta (GABRQ) chains, each subunit exhibiting distinct physiological and pharmacological properties. Binds UBQLN1. In terms of tissue distribution, expressed in brain, in cerebellar granule cells.

Its subcellular location is the postsynaptic cell membrane. The protein resides in the cell membrane. It catalyses the reaction chloride(in) = chloride(out). Functionally, alpha subunit of the heteropentameric ligand-gated chloride channel gated by gamma-aminobutyric acid (GABA), a major inhibitory neurotransmitter in the brain. GABA-gated chloride channels, also named GABA(A) receptors (GABAAR), consist of five subunits arranged around a central pore and contain GABA active binding site(s) located at the alpha and beta subunit interface(s). When activated by GABA, GABAARs selectively allow the flow of chloride anions across the cell membrane down their electrochemical gradient. Alpha-6/GABRA6 subunits are found at both synaptic and extrasynaptic sites. Chloride influx into the postsynaptic neuron following GABAAR opening decreases the neuron ability to generate a new action potential, thereby reducing nerve transmission. Extrasynaptic alpha-6-containing receptors contribute to the tonic GABAergic inhibition. Alpha-6 subunits are also present on glutamatergic synapses. In Homo sapiens (Human), this protein is Gamma-aminobutyric acid receptor subunit alpha-6.